A 309-amino-acid chain; its full sequence is 5-oxoprolinase subunit C (309 aa).

It belongs to the PxpC family. In terms of assembly, forms a complex composed of PxpA, PxpB and PxpC.

It catalyses the reaction 5-oxo-L-proline + ATP + 2 H2O = L-glutamate + ADP + phosphate + H(+). Catalyzes the cleavage of 5-oxoproline to form L-glutamate coupled to the hydrolysis of ATP to ADP and inorganic phosphate. This is 5-oxoprolinase subunit C from Haemophilus influenzae (strain ATCC 51907 / DSM 11121 / KW20 / Rd).